A 590-amino-acid chain; its full sequence is Potassium-transporting ATPase potassium-binding subunit (590 aa).

12 consecutive transmembrane segments (helical) span residues 3-23 (AFLL…KPLG), 63-83 (HYAL…YALQ), 134-154 (GLAV…IALI), 177-197 (VYVL…QGVI), 284-304 (FVQM…FGGM), 312-332 (WAVL…LAWA), 359-379 (FGIV…CGAV), 388-408 (ALGG…FGGV), 411-431 (GLYG…LMIG), 451-471 (IAIL…VVVT), 515-535 (LALG…VLAM), and 558-578 (LFVV…YIPA).

The protein belongs to the KdpA family. The system is composed of three essential subunits: KdpA, KdpB and KdpC.

The protein resides in the cell inner membrane. Functionally, part of the high-affinity ATP-driven potassium transport (or Kdp) system, which catalyzes the hydrolysis of ATP coupled with the electrogenic transport of potassium into the cytoplasm. This subunit binds the periplasmic potassium ions and delivers the ions to the membrane domain of KdpB through an intramembrane tunnel. The protein is Potassium-transporting ATPase potassium-binding subunit of Ralstonia pickettii (strain 12J).